The sequence spans 468 residues: MSTTLYDKIFQAHIVDEIGDDALLYIDRHLIHEVTSPQAFDGLAQKGRKVRRPDLTFATMDHSISTRSLAIDACGPANKLQLQTLADNCEANGIQLFPVGHQKQGIVHVMGPELGLIKPGMTVVCGDSHTATHGAFGALAFGIGTSQVEHVFATQTLKQSKGKCMQVKVNGARPLGVTAKDIILAIIGKIGHAGATGCVIEYCGDTIEGLSMEERMTVCNMSIEAGAKAGLIAPDQTTFDYLAGREYAPKGADWDAAVAYWKTLKSDTDAKFDIVVELAATDIAPQVTWGTNPGQVIGVNQPIPAPEDFSDPIDRDSAVKALKYMDIQAGQKLADLTVNHVFIGSCTNGRIEDMRAAAAIAKQGKVAENVTAIVVPGSVAVKAQAEAEQLDKIFLDAGFEWRLPGCSMCLGMNDDILSQGDRCASTSNRNFEGRQGRGARTHLVSPAMAAAAALAGRFADTRDFIAND.

Positions 346, 406, and 409 each coordinate [4Fe-4S] cluster.

The protein belongs to the aconitase/IPM isomerase family. LeuC type 1 subfamily. In terms of assembly, heterodimer of LeuC and LeuD. It depends on [4Fe-4S] cluster as a cofactor.

The catalysed reaction is (2R,3S)-3-isopropylmalate = (2S)-2-isopropylmalate. The protein operates within amino-acid biosynthesis; L-leucine biosynthesis; L-leucine from 3-methyl-2-oxobutanoate: step 2/4. Functionally, catalyzes the isomerization between 2-isopropylmalate and 3-isopropylmalate, via the formation of 2-isopropylmaleate. The polypeptide is 3-isopropylmalate dehydratase large subunit (Pseudoalteromonas atlantica (strain T6c / ATCC BAA-1087)).